The following is a 213-amino-acid chain: MTSLAELRKNYSLGSLDVADIDRNPFRQFDTWFQQAVDAKLPEPNTMTLATVDSRGRPSARIVLIKGVDERGFVFFTNYESRKGRELAANPYASLLFYWIELERQVRVEGRIVKTSAEESDAYFASRPLGSRIGAWASNQSQLIESRSQLETREREISLQYGDQPPRPPHWGGYRLVPEAIEFWQGRPSRLHDRLLYTRSDEHSDWQISRLSP.

Substrate is bound by residues 8-11 (RKNY) and Lys66. FMN-binding positions include 61-66 (RIVLIK), 76-77 (FT), Arg82, Lys83, and Gln105. 3 residues coordinate substrate: Tyr123, Arg127, and Ser131. Residues 140-141 (QS) and Trp184 each bind FMN. 190–192 (RLH) is a substrate binding site. Arg194 contacts FMN.

This sequence belongs to the pyridoxamine 5'-phosphate oxidase family. In terms of assembly, homodimer. It depends on FMN as a cofactor.

It carries out the reaction pyridoxamine 5'-phosphate + O2 + H2O = pyridoxal 5'-phosphate + H2O2 + NH4(+). It catalyses the reaction pyridoxine 5'-phosphate + O2 = pyridoxal 5'-phosphate + H2O2. It functions in the pathway cofactor metabolism; pyridoxal 5'-phosphate salvage; pyridoxal 5'-phosphate from pyridoxamine 5'-phosphate: step 1/1. Its pathway is cofactor metabolism; pyridoxal 5'-phosphate salvage; pyridoxal 5'-phosphate from pyridoxine 5'-phosphate: step 1/1. Functionally, catalyzes the oxidation of either pyridoxine 5'-phosphate (PNP) or pyridoxamine 5'-phosphate (PMP) into pyridoxal 5'-phosphate (PLP). The protein is Pyridoxine/pyridoxamine 5'-phosphate oxidase of Paraburkholderia phytofirmans (strain DSM 17436 / LMG 22146 / PsJN) (Burkholderia phytofirmans).